Consider the following 239-residue polypeptide: Acidic leucine-rich nuclear phosphoprotein 32 family member B (239 aa).

LRR repeat units follow at residues 16–40, 43–64, 65–87, and 89–110; these read AADAKELVLDNCRSDDGKIIGLTSE, SLEFLSMINVNLLSVANLPKLP, KLKKLELSDNRISGGLEVLAERT, and NLTHLNLSGNKIKEINTLEPLK. One can recognise an LRRCT domain in the interval 123 to 165; it reads CEVTMLNNYRESVFELLPKLTFLDGFDADDQEAPDSDPEAEDL. The span at 149–215 shows a compositional bias: acidic residues; the sequence is DADDQEAPDS…EEDEDDEDVP (67 aa). The segment at 149 to 239 is disordered; it reads DADDQEAPDS…EEEEDDEDDE (91 aa). Over residues 216–225 the composition is skewed to basic and acidic residues; the sequence is QGEKRKRDLS. The span at 226 to 239 shows a compositional bias: acidic residues; that stretch reads DEGEEEEEDDEDDE.

The protein belongs to the ANP32 family.

The protein localises to the nucleus. In terms of biological role, multifunctional protein working as a cell cycle progression factor as well as a cell survival factor. Required for the progression from the G1 to the S phase. Anti-apoptotic protein which functions as a caspase-3 inhibitor. Has no phosphatase 2A (PP2A) inhibitor activity. Exhibits histone chaperone properties, stimulating core histones to assemble into a nucleosome. This chain is Acidic leucine-rich nuclear phosphoprotein 32 family member B (anp32b), found in Xenopus laevis (African clawed frog).